We begin with the raw amino-acid sequence, 69 residues long: Dermaseptin-H3 (69 aa).

The N-terminal stretch at 1 to 22 (MAFLKKSLFLVLFLGMVSLSIC) is a signal peptide. Positions 23–43 (EEEKRENEDEEKQEDDEQSEM) are excised as a propeptide. Positions 24 to 44 (EEKRENEDEEKQEDDEQSEMK) are disordered. Over residues 30–40 (EDEEKQEDDEQ) the composition is skewed to acidic residues. Leucine amide is present on Leu-66. A propeptide spanning residues 68–69 (EQ) is cleaved from the precursor.

It belongs to the frog skin active peptide (FSAP) family. Dermaseptin subfamily. In terms of tissue distribution, expressed by the skin glands.

The protein localises to the secreted. Its function is as follows. Possesses a potent antimicrobial activity against Gram-positive and Gram-negative bacteria. Probably acts by disturbing membrane functions with its amphipathic structure. In Pithecopus azureus (Orange-legged monkey tree frog), this protein is Dermaseptin-H3.